A 552-amino-acid chain; its full sequence is Probable malate:quinone oxidoreductase (552 aa).

Positions 530-552 (DAKPATPEAKPAQASSPQHDMAL) are disordered. Over residues 542-552 (QASSPQHDMAL) the composition is skewed to polar residues.

Belongs to the MQO family. It depends on FAD as a cofactor.

It catalyses the reaction (S)-malate + a quinone = a quinol + oxaloacetate. Its pathway is carbohydrate metabolism; tricarboxylic acid cycle; oxaloacetate from (S)-malate (quinone route): step 1/1. The sequence is that of Probable malate:quinone oxidoreductase from Cronobacter sakazakii (strain ATCC BAA-894) (Enterobacter sakazakii).